Consider the following 199-residue polypeptide: Nucleoside triphosphate pyrophosphatase (199 aa).

Residue Asp-76 is the Proton acceptor of the active site.

Belongs to the Maf family. The cofactor is a divalent metal cation.

It localises to the cytoplasm. The catalysed reaction is a ribonucleoside 5'-triphosphate + H2O = a ribonucleoside 5'-phosphate + diphosphate + H(+). The enzyme catalyses a 2'-deoxyribonucleoside 5'-triphosphate + H2O = a 2'-deoxyribonucleoside 5'-phosphate + diphosphate + H(+). Functionally, nucleoside triphosphate pyrophosphatase. May have a dual role in cell division arrest and in preventing the incorporation of modified nucleotides into cellular nucleic acids. This chain is Nucleoside triphosphate pyrophosphatase, found in Ruegeria pomeroyi (strain ATCC 700808 / DSM 15171 / DSS-3) (Silicibacter pomeroyi).